The chain runs to 142 residues: Baculoviral IAP repeat-containing protein 5 (142 aa).

The BIR repeat unit spans residues 18–88 (RVSTFKNWPF…KHSSGCAFLS (71 aa)). Phosphoserine; by AURKC is present on Ser20. Position 23 is an N6-acetyllysine (Lys23). A Phosphothreonine; by CDK1 and CDK15 modification is found at Thr34. Thr48 bears the Phosphothreonine mark. The Zn(2+) site is built by Cys57, Cys60, His77, and Cys84. N6-acetyllysine is present on residues Lys90, Lys110, Lys112, and Lys115. At Thr117 the chain carries Phosphothreonine; by AURKB. At Lys129 the chain carries N6-acetyllysine.

Belongs to the IAP family. In terms of assembly, monomer or homodimer. Exists as a homodimer in the apo state and as a monomer in the CPC-bound state. The monomer protects cells against apoptosis more efficiently than the dimer. Only the dimeric form is capable of enhancing tubulin stability in cells. When phosphorylated, interacts with LAMTOR5/HBXIP; the resulting complex binds pro-CASP9, as well as active CASP9, but much less efficiently. Component of the chromosomal passenger complex (CPC) composed of at least BIRC5/survivin, CDCA8/borealin, INCENP, AURKB or AURKC; in the complex forms a triple-helix bundle-based subcomplex with INCENP and CDCA8. Interacts with JTB. Interacts (via BIR domain) with histone H3 phosphorylated at 'Thr-3' (H3pT3). Interacts with EVI5. Interacts with GTP-bound RAN in both the S and M phases of the cell cycle. Interacts with USP9X. Interacts with tubulin. Interacts with BIRC2/c-IAP1. The acetylated form at Lys-129 interacts with STAT3. The monomeric form deacetylated at Lys-129 interacts with XPO1/CRM1. The monomeric form interacts with XIAP/BIRC4. Both the dimeric and monomeric form can interact with DIABLO/SMAC. Interacts with BIRC6/bruce. Interacts with FBXL7; this interaction facilitates the polyubiquitination and subsequent proteasomal degradation of BIRC5 by the SCF(FBXL7) E3 ubiquitin-protein ligase complex. Ubiquitinated by the Cul9-RING ubiquitin-protein ligase complex, leading to its degradation. Ubiquitination is required for centrosomal targeting. Deubiquitinated by USP35 or USP38; leading to stabilization. Post-translationally, acetylation at Lys-129 results in its homodimerization, while deacetylation promotes the formation of monomers which heterodimerize with XPO1/CRM1 which facilitates its nuclear export. The acetylated form represses STAT3 transactivation. The dynamic equilibrium between its acetylation and deacetylation at Lys-129 determines its interaction with XPO1/CRM1, its subsequent subcellular localization, and its ability to inhibit STAT3 transactivation. In terms of processing, in vitro phosphorylation at Thr-117 by AURKB prevents interaction with INCENP and localization to mitotic chromosomes. Phosphorylation at Thr-48 by CK2 is critical for its mitotic and anti-apoptotic activities. Phosphorylation at Thr-34 by CDK15 is critical for its anti-apoptotic activity. Phosphorylation at Ser-20 by AURKC is critical for regulation of proper chromosome alignment and segregation, and possibly cytokinesis.

It is found in the cytoplasm. The protein localises to the nucleus. It localises to the chromosome. The protein resides in the centromere. Its subcellular location is the cytoskeleton. It is found in the spindle. The protein localises to the kinetochore. It localises to the midbody. Its function is as follows. Multitasking protein that has dual roles in promoting cell proliferation and preventing apoptosis. Component of a chromosome passage protein complex (CPC) which is essential for chromosome alignment and segregation during mitosis and cytokinesis. Acts as an important regulator of the localization of this complex; directs CPC movement to different locations from the inner centromere during prometaphase to midbody during cytokinesis and participates in the organization of the center spindle by associating with polymerized microtubules. Involved in the recruitment of CPC to centromeres during early mitosis via association with histone H3 phosphorylated at 'Thr-3' (H3pT3) during mitosis. The complex with RAN plays a role in mitotic spindle formation by serving as a physical scaffold to help deliver the RAN effector molecule TPX2 to microtubules. May counteract a default induction of apoptosis in G2/M phase. The acetylated form represses STAT3 transactivation of target gene promoters. May play a role in neoplasia. Inhibitor of CASP3 and CASP7. Essential for the maintenance of mitochondrial integrity and function. The polypeptide is Baculoviral IAP repeat-containing protein 5 (BIRC5) (Bos taurus (Bovine)).